Reading from the N-terminus, the 131-residue chain is D-ribose pyranase (131 aa).

His-20 functions as the Proton donor in the catalytic mechanism. Substrate contacts are provided by residues Asp-28, His-98, and 120–122 (YAN).

It belongs to the RbsD / FucU family. RbsD subfamily. Homodecamer.

The protein localises to the cytoplasm. It catalyses the reaction beta-D-ribopyranose = beta-D-ribofuranose. It functions in the pathway carbohydrate metabolism; D-ribose degradation; D-ribose 5-phosphate from beta-D-ribopyranose: step 1/2. Functionally, catalyzes the interconversion of beta-pyran and beta-furan forms of D-ribose. The protein is D-ribose pyranase of Bacillus thuringiensis (strain Al Hakam).